A 382-amino-acid polypeptide reads, in one-letter code: uncharacterized protein (382 aa).

Helical transmembrane passes span 14–34, 45–65, 75–95, 102–122, 131–151, 157–177, 204–224, 235–255, 265–284, 289–311, 325–345, and 349–369; these read GLLL…LWLA, MVSS…GYLI, YLAS…VGFW, FIAG…LMCS, LLAA…LLVS, LLHV…PLLF, LGVN…GLMP, ASIG…QWPV, LLVL…VMLT, APAL…AWAC, ALLL…AMLM, and SDNL…LMLL.

It belongs to the major facilitator superfamily. YcaD (TC 2.A.1.26) family.

It localises to the cell inner membrane. This is an uncharacterized protein from Salmonella arizonae (strain ATCC BAA-731 / CDC346-86 / RSK2980).